Reading from the N-terminus, the 86-residue chain is Large ribosomal subunit protein bL31B (86 aa).

It belongs to the bacterial ribosomal protein bL31 family. Type B subfamily. As to quaternary structure, part of the 50S ribosomal subunit.

This chain is Large ribosomal subunit protein bL31B, found in Cupriavidus pinatubonensis (strain JMP 134 / LMG 1197) (Cupriavidus necator (strain JMP 134)).